The chain runs to 467 residues: 3-isopropylmalate dehydratase large subunit (467 aa).

Positions 349, 409, and 412 each coordinate [4Fe-4S] cluster.

This sequence belongs to the aconitase/IPM isomerase family. LeuC type 1 subfamily. As to quaternary structure, heterodimer of LeuC and LeuD. Requires [4Fe-4S] cluster as cofactor.

It carries out the reaction (2R,3S)-3-isopropylmalate = (2S)-2-isopropylmalate. Its pathway is amino-acid biosynthesis; L-leucine biosynthesis; L-leucine from 3-methyl-2-oxobutanoate: step 2/4. In terms of biological role, catalyzes the isomerization between 2-isopropylmalate and 3-isopropylmalate, via the formation of 2-isopropylmaleate. This Ruegeria sp. (strain TM1040) (Silicibacter sp.) protein is 3-isopropylmalate dehydratase large subunit.